A 438-amino-acid polypeptide reads, in one-letter code: Gamma-glutamyl phosphate reductase (438 aa).

Belongs to the gamma-glutamyl phosphate reductase family.

The protein localises to the cytoplasm. It catalyses the reaction L-glutamate 5-semialdehyde + phosphate + NADP(+) = L-glutamyl 5-phosphate + NADPH + H(+). The protein operates within amino-acid biosynthesis; L-proline biosynthesis; L-glutamate 5-semialdehyde from L-glutamate: step 2/2. In terms of biological role, catalyzes the NADPH-dependent reduction of L-glutamate 5-phosphate into L-glutamate 5-semialdehyde and phosphate. The product spontaneously undergoes cyclization to form 1-pyrroline-5-carboxylate. In Prochlorococcus marinus (strain NATL2A), this protein is Gamma-glutamyl phosphate reductase.